A 79-amino-acid chain; its full sequence is Large ribosomal subunit protein eL38 (79 aa).

This sequence belongs to the eukaryotic ribosomal protein eL38 family.

This chain is Large ribosomal subunit protein eL38 (RPL38), found in Theileria parva (East coast fever infection agent).